The chain runs to 152 residues: Deoxyuridine 5'-triphosphate nucleotidohydrolase (152 aa).

Residues 71–73 (RSG), asparagine 84, 88–90 (LID), and methionine 98 each bind substrate.

Belongs to the dUTPase family. It depends on Mg(2+) as a cofactor.

The catalysed reaction is dUTP + H2O = dUMP + diphosphate + H(+). Its pathway is pyrimidine metabolism; dUMP biosynthesis; dUMP from dCTP (dUTP route): step 2/2. Its function is as follows. This enzyme is involved in nucleotide metabolism: it produces dUMP, the immediate precursor of thymidine nucleotides and it decreases the intracellular concentration of dUTP so that uracil cannot be incorporated into DNA. The chain is Deoxyuridine 5'-triphosphate nucleotidohydrolase from Pectobacterium carotovorum subsp. carotovorum (strain PC1).